A 437-amino-acid polypeptide reads, in one-letter code: UDP-N-acetylmuramoylalanine--D-glutamate ligase (437 aa).

112 to 118 is a binding site for ATP; the sequence is GSNGKST.

The protein belongs to the MurCDEF family.

It is found in the cytoplasm. It carries out the reaction UDP-N-acetyl-alpha-D-muramoyl-L-alanine + D-glutamate + ATP = UDP-N-acetyl-alpha-D-muramoyl-L-alanyl-D-glutamate + ADP + phosphate + H(+). It functions in the pathway cell wall biogenesis; peptidoglycan biosynthesis. In terms of biological role, cell wall formation. Catalyzes the addition of glutamate to the nucleotide precursor UDP-N-acetylmuramoyl-L-alanine (UMA). The chain is UDP-N-acetylmuramoylalanine--D-glutamate ligase from Haemophilus influenzae (strain 86-028NP).